The chain runs to 1233 residues: Hemocyanin A-type, units Ode to Odg (1233 aa).

An ODD region spans residues 1 to 4 (EGNE). Residues 5 to 422 (YLVRKNVERL…KQDADIDIPL (418 aa)) form an ODE region. His45 is a Cu cation binding site. Cys51 and Cys62 are joined by a disulfide. The 2'-(S-cysteinyl)-histidine (Cys-His) cross-link spans 63–65 (CLH). Cu cation is bound by residues His65, His74, His186, His190, and His217. Intrachain disulfides connect Cys176–Cys243 and Cys334–Cys340. Asn392 carries an N-linked (GlcNAc...) asparagine glycan. The segment at 423–839 (NHIRRNVESL…KEIEKEAVRG (417 aa)) is ODF. Cu cation is bound at residue His463. The cysteines at positions 468 and 478 are disulfide-linked. Positions 479-481 (CLH) form a cross-link, 2'-(S-cysteinyl)-histidine (Cys-His). Cu cation contacts are provided by His481 and His490. N-linked (GlcNAc...) asparagine glycosylation occurs at Asn538. Cystine bridges form between Cys589–Cys656 and Cys743–Cys748. His599, His603, and His630 together coordinate Cu cation. The tract at residues 840-1233 (TIIRKNVNSL…VFLAPAKTTH (394 aa)) is ODG. His880 provides a ligand contact to Cu cation. Cys886 and Cys896 are disulfide-bonded. N-linked (GlcNAc...) asparagine glycosylation occurs at Asn890. The segment at residues 897–899 (CQH) is a cross-link (2'-(S-cysteinyl)-histidine (Cys-His)). Residues His899, His908, His1008, His1012, and His1039 each coordinate Cu cation. 2 disulfide bridges follow: Cys998-Cys1065 and Cys1152-Cys1158.

This sequence belongs to the tyrosinase family. Hemocyanin subfamily. Decamers of large identical subunits (350 kDa), each containing 7 globular oxygen-binding domains: ODA, ODB, ODC, ODD, ODE, ODF, and ODG. The cofactor is Cu(2+).

Its function is as follows. Hemocyanins are copper-containing oxygen carriers occurring freely dissolved in the hemolymph of many mollusks and arthropods. The sequence is that of Hemocyanin A-type, units Ode to Odg from Enteroctopus dofleini (North Pacific giant octopus).